Reading from the N-terminus, the 137-residue chain is Large ribosomal subunit protein uL16 (137 aa).

Belongs to the universal ribosomal protein uL16 family. Part of the 50S ribosomal subunit.

Binds 23S rRNA and is also seen to make contacts with the A and possibly P site tRNAs. This chain is Large ribosomal subunit protein uL16, found in Ruegeria pomeroyi (strain ATCC 700808 / DSM 15171 / DSS-3) (Silicibacter pomeroyi).